A 249-amino-acid chain; its full sequence is tRNA (guanine-N(7)-)-methyltransferase (249 aa).

Positions 1–24 (MHSIPADTGHTPSRAPAGNGSPPA) are disordered. Glutamate 81, glutamate 106, aspartate 133, and aspartate 156 together coordinate S-adenosyl-L-methionine. Aspartate 156 is a catalytic residue. Position 160 (lysine 160) interacts with substrate. Residues 162 to 167 (RHNKRR) form an interaction with RNA region. Residues aspartate 192 and 227-230 (TKFE) contribute to the substrate site.

This sequence belongs to the class I-like SAM-binding methyltransferase superfamily. TrmB family.

It catalyses the reaction guanosine(46) in tRNA + S-adenosyl-L-methionine = N(7)-methylguanosine(46) in tRNA + S-adenosyl-L-homocysteine. It participates in tRNA modification; N(7)-methylguanine-tRNA biosynthesis. In terms of biological role, catalyzes the formation of N(7)-methylguanine at position 46 (m7G46) in tRNA. The polypeptide is tRNA (guanine-N(7)-)-methyltransferase (Paracidovorax citrulli (strain AAC00-1) (Acidovorax citrulli)).